The chain runs to 40 residues: uncharacterized protein (40 aa).

This is an uncharacterized protein from Myxococcus xanthus (strain DK1622).